The following is a 168-amino-acid chain: Photosystem I assembly protein Ycf3 (168 aa).

3 TPR repeats span residues 35–68, 72–105, and 120–153; these read AFTY…EIDP, SYIL…NPFL, and GEQA…TPGN.

It belongs to the Ycf3 family.

It is found in the plastid. It localises to the chloroplast thylakoid membrane. Functionally, essential for the assembly of the photosystem I (PSI) complex. May act as a chaperone-like factor to guide the assembly of the PSI subunits. The protein is Photosystem I assembly protein Ycf3 of Buxus microphylla (Littleleaf boxwood).